The primary structure comprises 4349 residues: Dynein heavy chain, cytoplasmic (4349 aa).

Positions 1 to 1907 are stem; it reads MEVTSAAAPS…YIKMANAKLN (1907 aa). 6 coiled-coil regions span residues 459 to 480, 1178 to 1215, 1266 to 1293, 1334 to 1354, 1560 to 1577, and 1640 to 1670; these read WEENVKEFTNVAREVTRRRNEK, LMKFASRLGNRMREINAEIEKARKHLESQSSDASSTAQ, SQWEALKEILEKKSRIVQDQTDALQAKI, ESRISKLQDDAQMVAKAKEAL, YKEFEEEAVAWEDKLNRV, and NIPNVQKSLERLAEMLNKIQKALGEYLEKER. 4 AAA regions span residues 1908-2133, 2201-2459, 2565-2814, and 2908-3177; these read YGFE…VLVS, NAIR…FTTA, EVNT…WVRG, and TFCE…QGKV. 1946–1953 serves as a coordination point for ATP; sequence GPAGTGKT. Residues 2194 to 2217 adopt a coiled-coil conformation; that stretch reads ANLEALENAIRELAAERHLVVNEL. ATP contacts are provided by residues 2239 to 2246, 2604 to 2611, and 2946 to 2953; these read GNSGSGKS, GPPGSGKT, and GVSGSGKT. Coiled coils occupy residues 3186–3294, 3420–3477, and 3774–3807; these read LDFV…LAKA, GPLK…EMSR, and DNVIETLETLKTEAAEISAKMSNTEGVMAEVEEI. Residues 3186 to 3477 are stalk; that stretch reads LDFVTQYIKL…TQAIKAEMSR (292 aa). AAA stretches follow at residues 3563–3792 and 4001–4213; these read LSTA…EISA and AERF…IVDT.

It belongs to the dynein heavy chain family. Consists of at least two heavy chains and a number of intermediate and light chains.

The protein resides in the cytoplasm. It is found in the cytoskeleton. In terms of biological role, cytoplasmic dynein acts as a motor for the intracellular retrograde motility of vesicles and organelles along microtubules. Dynein has ATPase activity; the force-producing power stroke is thought to occur on release of ADP. This Fusarium vanettenii (Neocosmospora pisi) protein is Dynein heavy chain, cytoplasmic (DHC1).